Here is a 202-residue protein sequence, read N- to C-terminus: Small ribosomal subunit protein uS4 (202 aa).

Basic residues predominate over residues 1–13 (MSRYRGPRLRVTR). Residues 1–42 (MSRYRGPRLRVTRRLGELPGLTRKASKKSNPPGQHGQARRKR) are disordered. Residues 90-152 (NRLDNVCFRL…KASKKLVEGN (63 aa)) enclose the S4 RNA-binding domain.

The protein belongs to the universal ribosomal protein uS4 family. Part of the 30S ribosomal subunit. Contacts protein S5. The interaction surface between S4 and S5 is involved in control of translational fidelity.

Its function is as follows. One of the primary rRNA binding proteins, it binds directly to 16S rRNA where it nucleates assembly of the body of the 30S subunit. With S5 and S12 plays an important role in translational accuracy. In Prochlorococcus marinus (strain MIT 9312), this protein is Small ribosomal subunit protein uS4.